Consider the following 74-residue polypeptide: Conotoxin AbVIL (74 aa).

The first 17 residues, 1 to 17 (VLIIAVLFLTACQLTTA), serve as a signal peptide directing secretion. Positions 17–41 (AETSSRGEQKHRAPRSTDKNSRMTK) are disordered. Residues 18–40 (ETSSRGEQKHRAPRSTDKNSRMT) constitute a propeptide that is removed on maturation. Residues 21-37 (SRGEQKHRAPRSTDKNS) show a composition bias toward basic and acidic residues. 3 cysteine pairs are disulfide-bonded: Cys43-Cys57, Cys50-Cys61, and Cys56-Cys68.

The protein belongs to the conotoxin O1 superfamily. Expressed by the venom duct.

The protein resides in the secreted. The chain is Conotoxin AbVIL from Conus abbreviatus (Abbreviated cone).